We begin with the raw amino-acid sequence, 443 residues long: Xaa-Pro dipeptidase (443 aa).

Residues D246, D257, H339, E384, and E423 each contribute to the Mn(2+) site.

This sequence belongs to the peptidase M24B family. Bacterial-type prolidase subfamily. Mn(2+) serves as cofactor.

The catalysed reaction is Xaa-L-Pro dipeptide + H2O = an L-alpha-amino acid + L-proline. In terms of biological role, splits dipeptides with a prolyl residue in the C-terminal position. The protein is Xaa-Pro dipeptidase of Escherichia coli O81 (strain ED1a).